Consider the following 74-residue polypeptide: Antimicrobial peptide HsAp1 (74 aa).

An N-terminal signal peptide occupies residues 1–21 (MSRRVILTLVLVTILVKTMAG). The propeptide occupies 22-33 (MESKKVETTDEI). Pro-65 is modified (proline amide). The propeptide occupies 69 to 74 (AISEQT).

It belongs to the non-disulfide-bridged peptide (NDBP) superfamily. Medium-length antimicrobial peptide (group 3) family. In terms of tissue distribution, expressed by the venom gland.

Its subcellular location is the secreted. The protein resides in the target cell membrane. Functionally, possesses antimicrobial activity against both Gram-negative (MIC=23.8-51.2 uM) and Gram-positive (MIC=11.8-46.5 uM) bacteria, as well as against the fungus C.tropicalis (MIC=48.6 uM). Also possesses a relatively high hemolytic activity. May act by disrupting the integrity of the bacterial cell membrane. This Heterometrus spinifer (Asia giant forest scorpion) protein is Antimicrobial peptide HsAp1.